Reading from the N-terminus, the 496-residue chain is Amidophosphoribosyltransferase (496 aa).

The propeptide occupies 1 to 21 (MNQSHSFPTDDPLDGDTLHEE). Residue Cys22 is the Nucleophile of the active site. One can recognise a Glutamine amidotransferase type-2 domain in the interval 22 to 241 (CGVFGILGHP…NGEVIICEIQ (220 aa)).

It in the C-terminal section; belongs to the purine/pyrimidine phosphoribosyltransferase family.

The enzyme catalyses 5-phospho-beta-D-ribosylamine + L-glutamate + diphosphate = 5-phospho-alpha-D-ribose 1-diphosphate + L-glutamine + H2O. The protein operates within purine metabolism; IMP biosynthesis via de novo pathway; N(1)-(5-phospho-D-ribosyl)glycinamide from 5-phospho-alpha-D-ribose 1-diphosphate: step 1/2. Catalyzes the formation of phosphoribosylamine from phosphoribosylpyrophosphate (PRPP) and glutamine. This is Amidophosphoribosyltransferase from Rhizobium etli (strain ATCC 51251 / DSM 11541 / JCM 21823 / NBRC 15573 / CFN 42).